Reading from the N-terminus, the 72-residue chain is MSLEILDQLEGKIKQAVETIQLLQLEVEELKEKNQQAQQANDELRSENEQLKGEHNNWQERLRSLLGQIDNV.

Residues 2–72 are a coiled coil; the sequence is SLEILDQLEG…RSLLGQIDNV (71 aa). Positions 34 to 57 are disordered; the sequence is NQQAQQANDELRSENEQLKGEHNN. The segment covering 42 to 57 has biased composition (basic and acidic residues); sequence DELRSENEQLKGEHNN.

Belongs to the ZapB family. Homodimer. The ends of the coiled-coil dimer bind to each other, forming polymers. Interacts with FtsZ.

The protein resides in the cytoplasm. In terms of biological role, non-essential, abundant cell division factor that is required for proper Z-ring formation. It is recruited early to the divisome by direct interaction with FtsZ, stimulating Z-ring assembly and thereby promoting cell division earlier in the cell cycle. Its recruitment to the Z-ring requires functional FtsA or ZipA. The sequence is that of Cell division protein ZapB from Mannheimia succiniciproducens (strain KCTC 0769BP / MBEL55E).